A 413-amino-acid chain; its full sequence is DnaJ protein homolog (413 aa).

Positions 10–75 constitute a J domain; sequence NTKYYEILGV…REIYDQYGED (66 aa). A CR-type zinc finger spans residues 133–217; sequence GTSKKLSLSR…CKGEKVVQEK (85 aa). 4 CXXCXGXG motif repeats span residues 146 to 153, 162 to 169, 189 to 196, and 205 to 212; these read CSKCKGKG, CPGCQGSG, CNECKGTG, and CSQCKGEK. Residues 387 to 413 are disordered; the sequence is RRKQAQEAYDEDEDMHGGAQRVQCAQQ. C410 carries the cysteine methyl ester modification. C410 carries the S-farnesyl cysteine lipid modification. A propeptide spans 411–413 (removed in mature form); that stretch reads AQQ.

As to expression, expressed in seedlings in all tissues, but exceedingly high levels in hypocotyledons and roots.

Its subcellular location is the cell membrane. In terms of biological role, plays a continuous role in plant development probably in the structural organization of compartments. This chain is DnaJ protein homolog (DNAJ1), found in Cucumis sativus (Cucumber).